Consider the following 404-residue polypeptide: Cysteine desulfurase IscS (404 aa).

Pyridoxal 5'-phosphate is bound by residues 75-76 (AT), asparagine 155, glutamine 183, and 203-205 (SGH). Lysine 206 bears the N6-(pyridoxal phosphate)lysine mark. Threonine 243 is a pyridoxal 5'-phosphate binding site. Cysteine 328 acts as the Cysteine persulfide intermediate in catalysis. Residue cysteine 328 coordinates [2Fe-2S] cluster.

It belongs to the class-V pyridoxal-phosphate-dependent aminotransferase family. NifS/IscS subfamily. In terms of assembly, homodimer. Forms a heterotetramer with IscU, interacts with other sulfur acceptors. Pyridoxal 5'-phosphate serves as cofactor.

It localises to the cytoplasm. The enzyme catalyses (sulfur carrier)-H + L-cysteine = (sulfur carrier)-SH + L-alanine. The protein operates within cofactor biosynthesis; iron-sulfur cluster biosynthesis. Its function is as follows. Master enzyme that delivers sulfur to a number of partners involved in Fe-S cluster assembly, tRNA modification or cofactor biosynthesis. Catalyzes the removal of elemental sulfur atoms from cysteine to produce alanine. Functions as a sulfur delivery protein for Fe-S cluster synthesis onto IscU, an Fe-S scaffold assembly protein, as well as other S acceptor proteins. The protein is Cysteine desulfurase IscS of Mannheimia succiniciproducens (strain KCTC 0769BP / MBEL55E).